Consider the following 1681-residue polypeptide: Sodium channel protein type 7 subunit alpha (1681 aa).

The Cytoplasmic segment spans residues 1–118 (MLTSPEPKGL…RRAAIKALVH (118 aa)). The stretch at 101 to 402 (TLSPLNSLRR…ILTMTYEKEK (302 aa)) is one I repeat. A helical transmembrane segment spans residues 119-138 (PLFRLLILISVLTDSILMCM). Residues 139–142 (SNLP) lie on the Extracellular side of the membrane. A helical membrane pass occupies residues 143 to 168 (EWILAIENTLLGIYAFEILVKVIARG). Over 169–179 (IWAGSFSFLGD) the chain is Cytoplasmic. Residues 180–197 (LWNWLDFSVTLFELITRF) form a helical membrane-spanning segment. The Extracellular segment spans residues 198–201 (SPLS). A helical membrane pass occupies residues 202-220 (SFLMLKTIRTFRILKIIPL). Over 221–238 (NHGLQSIVMTLAQCLKKL) the chain is Cytoplasmic. The helical transmembrane segment at 239–260 (FGAIALALFFLAVFSLLGMGLF) threads the bilayer. The Extracellular segment spans residues 261 to 339 (MGNLKHKCLR…PDNGFTSFDN (79 aa)). Cysteines 268 and 308 form a disulfide. Asn277, Asn282, Asn288, and Asn310 each carry an N-linked (GlcNAc...) asparagine glycan. Positions 340-367 (FGWSLLAMFRLMTQDYPELLYHQILYAS) form an intramembrane region, pore-forming. A topological domain (extracellular) is located at residue Gly368. A helical membrane pass occupies residues 369–408 (KVYMIFFVMISFWFAFYLTSLFLGILTMTYEKEKQRACEE). The Cytoplasmic segment spans residues 409–506 (SGGLDPKCQQ…EFADRVITHP (98 aa)). One copy of the II repeat lies at 488–757 (CSPCWVKLNE…QLAMARIKSG (270 aa)). Residues 507-522 (LADLFLVICIVLNICF) traverse the membrane as a helical segment. At 523–531 (LALEHFPMS) the chain is on the extracellular side. The chain crosses the membrane as a helical span at residues 532–560 (EELRSLLHVGNLVFIGIYTIEMILKIIAM). Over 561–569 (HPYGYFQIS) the chain is Cytoplasmic. A helical membrane pass occupies residues 570 to 587 (WNIFDSILVVLELTEILL). The Extracellular portion of the chain corresponds to 588-593 (ADVEGL). Residues 594-609 (AVLITVPLIFIKLGKY) form a helical membrane-spanning segment. Residues 610–626 (GPPFKSLMRILGSSLMA) are Cytoplasmic-facing. A helical membrane pass occupies residues 627 to 655 (LKDLVLLLCIFVYFSAVFGMKLFGRSYKD). The Extracellular portion of the chain corresponds to 656 to 673 (CVCHIKEDCQPQRWHMSD). 2 disulfides stabilise this stretch: Cys658/Cys664 and Cys696/Cys705. Positions 674–700 (FLHAYMTVFRILCGEWIETLWECMEVA) form an intramembrane region, pore-forming. Residue Gly701 is a topological domain, extracellular. Residues 702 to 732 (QAWCIPFYMMVILIGNLLILYLFVTLVSSFS) traverse the membrane as a helical segment. At 733-934 (YYDATSEVNK…KTCCKIVENS (202 aa)) the chain is on the cytoplasmic side. Positions 806-834 (YKDQSSSTEKTPVTESESQSLIASPSASE) are enriched in polar residues. Residues 806–875 (YKDQSSSTEK…MKQSSSSECS (70 aa)) are disordered. Ser843 is modified (phosphoserine). The stretch at 916-1224 (NGKIWKNIRK…KKQYRALKKL (309 aa)) is one III repeat. Residues 935–953 (WFECFIGLVTLLCTGTLAL) traverse the membrane as a helical segment. At 954–961 (EDIYIDQR) the chain is on the extracellular side. Residues 962 to 990 (KTTKILLEYADMIFAYIFILEMLLKWVAY) form a helical membrane-spanning segment. Residues 991 to 998 (GFKAFFSN) are Cytoplasmic-facing. A helical transmembrane segment spans residues 999-1020 (NWYKLDFMVVIVFCLSLIGKTR). Residue Glu1021 is a topological domain, extracellular. A helical membrane pass occupies residues 1022 to 1040 (DLNPLTSIKFLRALRVLSQ). Residues 1041–1055 (FERMKVVLRALIKTT) are Cytoplasmic-facing. The helical transmembrane segment at 1056–1080 (LPTVSVFLVCLMIWLLFSVIGVQLF) threads the bilayer. Topologically, residues 1081-1127 (AGKFYECIDPTKGERFPVFEVMNKSQCEKLLFNESMPWENAKLNFDN) are extracellular. Cys1087 and Cys1107 form a disulfide bridge. N-linked (GlcNAc...) asparagine glycosylation is found at Asn1103 and Asn1113. An intramembrane region (pore-forming) is located at residues 1128–1154 (VGNGFLSLLQVATFNGWISIMNSAIDS). Over 1155–1167 (VGVNMQPSFEYNL) the chain is Extracellular. A helical transmembrane segment spans residues 1168 to 1202 (YMYSYFIIFVIFGLFLPLCMLIGVIIRNFNKQKIK). The Cytoplasmic portion of the chain corresponds to 1203–1250 (QGGSNIFITVKQKKQYRALKKLLYADVQKPTPRPRNKFQGFLFDLVTH). One copy of the IV repeat lies at 1233 to 1531 (TPRPRNKFQG…WNRFDPDRTQ (299 aa)). The helical transmembrane segment at 1251-1272 (RVFNVIIILLICFQATTIMIQK) threads the bilayer. The Extracellular portion of the chain corresponds to 1273 to 1276 (DEQS). A helical membrane pass occupies residues 1277–1305 (PQMETAIFWMNSIFVMLFTLECILKLTAF). Topologically, residues 1306 to 1312 (RCHYFTS) are cytoplasmic. Residues 1313 to 1338 (AWNVHDFMVVIFSITGLLLPLTIGQY) form a helical membrane-spanning segment. Topologically, residues 1339 to 1341 (FVP) are extracellular. Residues 1342-1362 (PSLVQLILLSRVIHILRPGKG) form a helical membrane-spanning segment. The Cytoplasmic segment spans residues 1363–1377 (PKVFHDLMLPLILAL). A helical membrane pass occupies residues 1378–1402 (PALLNISLLIFLVMFIYAIFGMYNF). Residues 1403 to 1420 (AYVKKEAGINDVSNFETF) are Extracellular-facing. The pore-forming intramembrane region spans 1421 to 1444 (GSSMLCLFQVTTFSGWDGMLDAIF). The Extracellular portion of the chain corresponds to 1445 to 1468 (NSQWSDCDPDKINPGTQVKGDCGS). Cys1451 and Cys1466 form a disulfide bridge. A helical membrane pass occupies residues 1469 to 1504 (PSVGISYFVSYILISWLIIVNMYIVLIMEFLSIPSQ). Residues 1505-1681 (KKSRTLSEDD…EEKASIQTQI (177 aa)) are Cytoplasmic-facing. Residues 1647-1662 (NVSDTPAIDDRRDDLT) are compositionally biased toward basic and acidic residues. The segment at 1647–1681 (NVSDTPAIDDRRDDLTSKGAHSGKIEEKASIQTQI) is disordered.

The protein belongs to the sodium channel (TC 1.A.1.10) family. SCN7A subfamily. In terms of assembly, the sodium channel formed by SCN7A is probably a heterooligomeric complex consisting of the ion conducting pore forming alpha subunit SCN7A and regulatory beta subunits such as SCN3B. Interacts with ATP1A1; activates ATP1A1 and thereby indirectly signals to nearby neurons to regulate sodium homeostasis. In terms of tissue distribution, not tissue specific but widely expressed. Expressed in regions of the central nervous system that control body fluid ionic balance.

It localises to the cell membrane. The enzyme catalyses Na(+)(in) = Na(+)(out). Sodium leak channel functioning as an osmosensor regulating sodium ion levels in various tissues and organs. While most sodium channels are voltage-gated, SCN7A is not and lets sodium flow through membrane along its concentration gradient. In glial cells of the central nervous system, senses body-fluid sodium levels and controls salt intake behavior as well as voluntary water intake through activation of nearby neurons to maintain appropriate sodium levels in the body. By mediating sodium influx into keratinocytes, also plays a role in skin barrier homeostasis. This is Sodium channel protein type 7 subunit alpha from Mus musculus (Mouse).